The chain runs to 146 residues: PTS system fructose-specific EIIA component (146 aa).

The 124-residue stretch at 1 to 124 folds into the PTS EIIA type-4 domain; it reads MISVIISGHG…NLKAMSQQSF (124 aa). Residue H9 is the Tele-phosphohistidine intermediate of the active site. H9 carries the post-translational modification Phosphohistidine; by HPr.

The protein resides in the cytoplasm. The phosphoenolpyruvate-dependent sugar phosphotransferase system (sugar PTS), a major carbohydrate active transport system, catalyzes the phosphorylation of incoming sugar substrates concomitantly with their translocation across the cell membrane. The enzyme II LevDE PTS system is involved in fructose transport. Functionally, levD and LevE act as negative regulators of the levanase operon. They may be involved in a PTS-mediated phosphorylation of a regulator. In Bacillus subtilis (strain 168), this protein is PTS system fructose-specific EIIA component.